We begin with the raw amino-acid sequence, 211 residues long: Mitotic spindle assembly checkpoint protein MAD2B (211 aa).

The HORMA domain maps to 13 to 203 (QVVADILCEF…SDILKMQLYV (191 aa)).

As to quaternary structure, homooligomer. Interacts with rev1. Interacts with rev3l. Interacts with fzr1 (in complex with the anaphase promoting complex APC). May interact with cdc20.

It is found in the nucleus. The protein resides in the cytoplasm. Its subcellular location is the cytoskeleton. It localises to the spindle. Adapter protein able to interact with different proteins and involved in different biological processes. Mediates the interaction between the error-prone DNA polymerase zeta catalytic subunit rev3l and the inserter polymerase rev1, thereby mediating the second polymerase switching in translesion DNA synthesis. Translesion DNA synthesis releases the replication blockade of replicative polymerases, stalled in presence of DNA lesions. May also play a role in signal transduction in response to DNA damage. May regulate the activation of the anaphase promoting complex APC thereby regulating progression through the cell cycle. Through transcriptional regulation may play a role in epithelial-mesenchymal transdifferentiation. Its function is as follows. Inhibits the fzr1-APC complex activity during mitosis. Plays a role in progression of mitosis. This is Mitotic spindle assembly checkpoint protein MAD2B (mad2l2) from Xenopus laevis (African clawed frog).